We begin with the raw amino-acid sequence, 109 residues long: Class I hydrophobin G (109 aa).

Residues 1-19 form the signal peptide; sequence MRLSILSVFSLVGAGMVSA. Intrachain disulfides connect Cys-36–Cys-90, Cys-42–Cys-84, Cys-43–Cys-76, and Cys-91–Cys-105.

This sequence belongs to the fungal hydrophobin family.

Its subcellular location is the secreted. The protein localises to the cell wall. Its function is as follows. Aerial growth, conidiation, and dispersal of filamentous fungi in the environment rely upon a capability of their secreting small amphipathic proteins called hydrophobins (HPBs) with low sequence identity. Class I can self-assemble into an outermost layer of rodlet bundles on aerial cell surfaces, conferring cellular hydrophobicity that supports fungal growth, development and dispersal; whereas Class II form highly ordered films at water-air interfaces through intermolecular interactions but contribute nothing to the rodlet structure. In P.expansum, hydrophobins contribute to germination, tolerance to cold stress and mycotoxins patulin and citrinin production. The sequence is that of Class I hydrophobin G from Penicillium expansum (Blue mold rot fungus).